We begin with the raw amino-acid sequence, 175 residues long: ADP-ribosylation factor 6 (175 aa).

Gly2 carries the N-myristoyl glycine lipid modification. Lys3 carries N6-myristoyl lysine lipidation. GTP contacts are provided by residues 23–28, 41–44, 63–67, 122–125, and 155–156; these read AAGKTT, TIPT, DVGGQ, NKQD, and CA.

It belongs to the small GTPase superfamily. Arf family. In terms of assembly, interacts (when activated) with GGA1, GGA2 and GGA3; the interaction is required for proper subcellular location of GGA1, GGA2 and GGA3. Interacts with PIP5K1C. Interacts with USP6 (via Rab-GAP TBC domain). Interacts with RAB11FIP3 and RAB11FIP4. Interacts with HERC1. Interacts with ARHGAP21. Interacts with ASAP3; the interaction is stabilized by calcium ions. Interacts with NCS1/FREQ at the plasma membrane. Interacts with TBC1D24. Interacts with ECPAS. Interacts with MICALL1. Interacts with SPAG9 homodimers, forming heterotetramers. Interacts with CYTH3. Interacts with ASAP2. Interacts with UACA. Interacts with KIF23, forming heterodimers and heterotetramers. Interacts with C9orf72. Interacts (GTP-bound form) with TJAP1/PILT. Interacts with PRKAA2. Interacts with CD36 (when palmitoylated); this interaction mediates CD36 transport from the Golgi to the plasma membrane. Interacts with APBB1. (Microbial infection) Interacts with the V.cholerae enterotoxin subunit A1; this causes a conformation change so that the toxin can bind NAD and catalyze the ADP-ribosylation of Gs alpha. As to quaternary structure, (Microbial infection) Interacts with EspG from enteropathogenic E.coli. In terms of assembly, (Microbial infection) Identified in a complex with RAB1A and EspG from enteropathogenic E.coli. (Microbial infection) Interacts with human enterovirus 71 protein VP1. Post-translationally, GTP-bound form is myristoylated on Lys-3 by NMT1 and NMT2, allowing ARF6 to remain on membranes during the GTPase cycle, thereby promoting its activity. GDP-bound inactive form is demyristoylated on Lys-3 by SIRT2 at early endosomes or endocytic recycling compartment to allow its efficient activation by a guanine exchange factor (GEF) after GDP release. In terms of tissue distribution, ubiquitous, with higher levels in heart, substantia nigra, and kidney.

The protein localises to the cytoplasm. It is found in the cytosol. It localises to the cell membrane. Its subcellular location is the endosome membrane. The protein resides in the recycling endosome membrane. The protein localises to the cell projection. It is found in the filopodium membrane. It localises to the ruffle. Its subcellular location is the cleavage furrow. The protein resides in the midbody. The protein localises to the midbody ring. It is found in the early endosome membrane. It localises to the golgi apparatus. Its subcellular location is the trans-Golgi network membrane. It catalyses the reaction GTP + H2O = GDP + phosphate + H(+). Its activity is regulated as follows. Activation is generally mediated by a guanine exchange factor (GEF), while inactivation through hydrolysis of bound GTP is catalyzed by a GTPase activating protein (GAP). Activated by ASAP3. Inactivated by ACAP1 and ACAP2. Activated by NGF via NTRK1. Activated by PRKAA2 through its C-terminal regulatory domain. Functionally, GTP-binding protein involved in protein trafficking that regulates endocytic recycling and cytoskeleton remodeling. GTP-bound form plays an important role in the transport of multiple palmitoylated proteins form the Golgi to the plasma membrane. Required for normal completion of mitotic cytokinesis. Plays a role in the reorganization of the actin cytoskeleton and the formation of stress fibers. Involved in the regulation of dendritic spine development, contributing to the regulation of dendritic branching and filopodia extension. Potentiates the neurite outgrowth in primary neurons by interacting with the molecular adapter APBB1. Plays an important role in membrane trafficking, during junctional remodeling and epithelial polarization. Regulates surface levels of adherens junction proteins such as CDH1. Required for NTRK1 sorting to the recycling pathway from early endosomes. (Microbial infection) Functions as an allosteric activator of the cholera toxin catalytic subunit, an ADP-ribosyltransferase. In terms of biological role, (Microbial infection) Plays a key role in the endocytosis of enterovirus 71 and thus viral entry into brain microvascular endothelial cells. This Homo sapiens (Human) protein is ADP-ribosylation factor 6.